We begin with the raw amino-acid sequence, 95 residues long: Small ribosomal subunit protein bS20c (95 aa).

The segment at 76-95 (NGSAKKAKLTKRLKEKKISL) is disordered. Positions 80-95 (KKAKLTKRLKEKKISL) are enriched in basic residues.

The protein belongs to the bacterial ribosomal protein bS20 family.

It localises to the plastid. It is found in the chloroplast. Binds directly to 16S ribosomal RNA. The protein is Small ribosomal subunit protein bS20c of Guillardia theta (Cryptophyte).